The sequence spans 286 residues: MAVNYKVSLDDVVDIDYNGVRQAITQFLRKYLEASGASGYVLGVSGGVDSSLALALAVDAVGSGRVTALIMPDREVTPERDVEDALRLVRSFGVEHAVIDISPIVMVYISALPIFEDEEKDRVPVGNLRARIRANILYYYANKLGKLVLGTGDRSEYLIGYFTKYGDAACDVAPLTVLYKSQVRRLAELIGVPRDIAYKPSSPRLWKGHEAEAELGLSYNEIDVILYSRFDLKIPWEEIPRATGLERAKVERVRLLHEASSHKRSPPASPDLGEIKKHYKQHAGKK.

43 to 50 (GVSGGVDS) is an ATP binding site. Position 49 (Asp-49) interacts with Mg(2+). Residue Arg-131 participates in deamido-NAD(+) binding. ATP is bound at residue Thr-151. Glu-156 provides a ligand contact to Mg(2+). Deamido-NAD(+) contacts are provided by Lys-164 and Asp-171. Lys-180 and Ser-202 together coordinate ATP. The disordered stretch occupies residues 257-286 (HEASSHKRSPPASPDLGEIKKHYKQHAGKK). 262–263 (HK) is a binding site for deamido-NAD(+). Positions 277–286 (KHYKQHAGKK) are enriched in basic residues.

It belongs to the NAD synthetase family. Homodimer.

The enzyme catalyses deamido-NAD(+) + NH4(+) + ATP = AMP + diphosphate + NAD(+) + H(+). The protein operates within cofactor biosynthesis; NAD(+) biosynthesis; NAD(+) from deamido-NAD(+) (ammonia route): step 1/1. Catalyzes the ATP-dependent amidation of deamido-NAD to form NAD. Uses ammonia as a nitrogen source. The protein is NH(3)-dependent NAD(+) synthetase of Aeropyrum pernix (strain ATCC 700893 / DSM 11879 / JCM 9820 / NBRC 100138 / K1).